Reading from the N-terminus, the 409-residue chain is Accessory Sec system protein translocase subunit SecY2 (409 aa).

Transmembrane regions (helical) follow at residues 16–36 (ILIT…PIPG), 61–81 (LSQV…MILL), 104–124 (VVML…FQYH), 132–152 (LLLA…IGNL), 161–181 (MTIL…PLIF), 190–210 (LAII…ITFE), 242–262 (GMAF…IILL), 286–306 (GVVI…FVNI), 341–361 (LFGT…LLFA), and 374–394 (TGIF…FQVI).

It belongs to the SecY/SEC61-alpha family. SecY2 subfamily. Component of the accessory SecA2/SecY2 protein translocase complex required to export cell wall proteins. May form heterotrimers with SecE and SecG subunits.

The protein resides in the cell membrane. Part of the accessory SecA2/SecY2 system specifically required for export of possible cell wall proteins. The central subunit of a protein translocation channel. This chain is Accessory Sec system protein translocase subunit SecY2, found in Streptococcus agalactiae serotype Ia (strain ATCC 27591 / A909 / CDC SS700).